The following is a 347-amino-acid chain: Heat-inducible transcription repressor HrcA (347 aa).

The protein belongs to the HrcA family.

In terms of biological role, negative regulator of class I heat shock genes (grpE-dnaK-dnaJ and groELS operons). Prevents heat-shock induction of these operons. The chain is Heat-inducible transcription repressor HrcA from Lactococcus lactis subsp. cremoris (strain MG1363).